Consider the following 429-residue polypeptide: Ribosomal RNA small subunit methyltransferase B (429 aa).

Residues 254–260 (CAAPGGK), Asp-277, Asp-303, and Asp-322 contribute to the S-adenosyl-L-methionine site. Cys-375 acts as the Nucleophile in catalysis.

This sequence belongs to the class I-like SAM-binding methyltransferase superfamily. RsmB/NOP family.

Its subcellular location is the cytoplasm. It catalyses the reaction cytidine(967) in 16S rRNA + S-adenosyl-L-methionine = 5-methylcytidine(967) in 16S rRNA + S-adenosyl-L-homocysteine + H(+). Specifically methylates the cytosine at position 967 (m5C967) of 16S rRNA. In Serratia proteamaculans (strain 568), this protein is Ribosomal RNA small subunit methyltransferase B.